The following is a 236-amino-acid chain: 2,3,4,5-tetrahydropyridine-2,6-dicarboxylate N-acetyltransferase (236 aa).

Belongs to the transferase hexapeptide repeat family. DapH subfamily.

It carries out the reaction (S)-2,3,4,5-tetrahydrodipicolinate + acetyl-CoA + H2O = L-2-acetamido-6-oxoheptanedioate + CoA. Its pathway is amino-acid biosynthesis; L-lysine biosynthesis via DAP pathway; LL-2,6-diaminopimelate from (S)-tetrahydrodipicolinate (acetylase route): step 1/3. Functionally, catalyzes the transfer of an acetyl group from acetyl-CoA to tetrahydrodipicolinate. In Listeria innocua serovar 6a (strain ATCC BAA-680 / CLIP 11262), this protein is 2,3,4,5-tetrahydropyridine-2,6-dicarboxylate N-acetyltransferase.